Reading from the N-terminus, the 254-residue chain is UPF0246 protein FTH_1656 (254 aa).

The protein belongs to the UPF0246 family.

The sequence is that of UPF0246 protein FTH_1656 from Francisella tularensis subsp. holarctica (strain OSU18).